Reading from the N-terminus, the 555-residue chain is Steroid-22-oyl-CoA synthetase (555 aa).

It belongs to the ATP-dependent AMP-binding enzyme family.

It catalyses the reaction 3-oxochol-4-en-22-oate + ATP + CoA = 3-oxochol-4-en-22-oyl-CoA + AMP + diphosphate. It carries out the reaction 3-hydroxy-9-oxo-9,10-seco-chola-1,3,5-trien-22-oate + ATP + CoA = 3-hydroxy-9-oxo-9,10-seco-chola-1,3,5-trien-22-oyl-CoA + AMP + diphosphate. The protein operates within steroid metabolism. Functionally, involved in cholate catabolism. Catalyzes the ATP-dependent formation of CoA thioesters of steroids with isopropanoyl side chains, likely occurring as degradation intermediates. Can use 4-BNC, HSBNC and HIDP as substrate. This Rhodococcus jostii (strain RHA1) protein is Steroid-22-oyl-CoA synthetase.